A 523-amino-acid polypeptide reads, in one-letter code: DNA-directed primase/polymerase protein (523 aa).

Substrate-binding positions include Arg-78, 117-119 (DLE), and 168-172 (KFSHH). The Mn(2+) site is built by Asp-117 and Glu-119. Positions 203–230 (LKKSNPEAPGENRDDVEGTQAKRRKTEE) are disordered. Substrate is bound by residues 258–261 (RNFR) and Lys-267. Residues Cys-390, His-397, Cys-417, and Cys-422 each contribute to the Zn(2+) site. The Zinc knuckle motif motif lies at 390–423 (CHNVKRFHKSNNIIIVVDLKEEVWYQKCHDPECR). Residues 467–477 (APAESTSTTPS) are compositionally biased toward low complexity. The tract at residues 467–523 (APAESTSTTPSEDTEGWGDWPDDPAYLRALQEVEEEEEDEDEEVPDELLLQAVNECE) is disordered. Composition is skewed to acidic residues over residues 478 to 488 (EDTEGWGDWPD) and 498 to 512 (EVEE…EVPD).

It belongs to the eukaryotic-type primase small subunit family. Mn(2+) is required as a cofactor.

The protein resides in the nucleus. The protein localises to the mitochondrion matrix. Its subcellular location is the chromosome. It carries out the reaction ssDNA + n NTP = ssDNA/pppN(pN)n-1 hybrid + (n-1) diphosphate.. The enzyme catalyses DNA(n) + a 2'-deoxyribonucleoside 5'-triphosphate = DNA(n+1) + diphosphate. In terms of biological role, DNA primase and DNA polymerase required to tolerate replication-stalling lesions by bypassing them. Required to facilitate mitochondrial and nuclear replication fork progression by initiating de novo DNA synthesis using dNTPs and acting as an error-prone DNA polymerase able to bypass certain DNA lesions. Shows a high capacity to tolerate DNA damage lesions such as 8oxoG and abasic sites in DNA. Provides different translesion synthesis alternatives when DNA replication is stalled: able to synthesize DNA primers downstream of lesions, such as UV lesions, R-loops and G-quadruplexes, to allow DNA replication to continue. Can also realign primers ahead of 'unreadable lesions' such as abasic sites and 6-4 photoproduct (6-4 pyrimidine-pyrimidinone), thereby skipping the lesion. Repriming avoids fork degradation while leading to accumulation of internal ssDNA gaps behind the forks. Also able to incorporate nucleotides opposite DNA lesions such as 8oxoG, like a regular translesion synthesis DNA polymerase. Also required for reinitiating stalled forks after ultraviolet (UV) damage during nuclear DNA replication. Required for mitochondrial DNA (mtDNA) synthesis and replication, by reinitiating synthesis after UV damage or in the presence of chain-terminating nucleotides. In addition to its role in DNA damage response, also required to maintain efficient nuclear and mitochondrial DNA replication in unperturbed cells. The chain is DNA-directed primase/polymerase protein from Danio rerio (Zebrafish).